The following is a 474-amino-acid chain: Bifunctional protein HldE (474 aa).

The ribokinase stretch occupies residues 1 to 318 (MKLSMPRFDQ…RAVQREQGSE (318 aa)). 194-197 (NLSE) contributes to the ATP binding site. Residue D263 is part of the active site. Residues 343 to 474 (FTNGCFDILH…AIVEKIRQKG (132 aa)) form a cytidylyltransferase region.

This sequence in the N-terminal section; belongs to the carbohydrate kinase PfkB family. In the C-terminal section; belongs to the cytidylyltransferase family. Homodimer.

It carries out the reaction D-glycero-beta-D-manno-heptose 7-phosphate + ATP = D-glycero-beta-D-manno-heptose 1,7-bisphosphate + ADP + H(+). It catalyses the reaction D-glycero-beta-D-manno-heptose 1-phosphate + ATP + H(+) = ADP-D-glycero-beta-D-manno-heptose + diphosphate. Its pathway is nucleotide-sugar biosynthesis; ADP-L-glycero-beta-D-manno-heptose biosynthesis; ADP-L-glycero-beta-D-manno-heptose from D-glycero-beta-D-manno-heptose 7-phosphate: step 1/4. It participates in nucleotide-sugar biosynthesis; ADP-L-glycero-beta-D-manno-heptose biosynthesis; ADP-L-glycero-beta-D-manno-heptose from D-glycero-beta-D-manno-heptose 7-phosphate: step 3/4. Functionally, catalyzes the phosphorylation of D-glycero-D-manno-heptose 7-phosphate at the C-1 position to selectively form D-glycero-beta-D-manno-heptose-1,7-bisphosphate. In terms of biological role, catalyzes the ADP transfer from ATP to D-glycero-beta-D-manno-heptose 1-phosphate, yielding ADP-D-glycero-beta-D-manno-heptose. The protein is Bifunctional protein HldE of Pseudomonas aeruginosa (strain UCBPP-PA14).